The following is a 374-amino-acid chain: CMP-N-acetylneuraminate-beta-1,4-galactoside alpha-2,3-sialyltransferase (374 aa).

Residues 1–8 (MGLLVFVR) are Cytoplasmic-facing. A helical; Signal-anchor for type II membrane protein membrane pass occupies residues 9–28 (NLLLALCLFLVLGFLYYSAW). The Lumenal segment spans residues 29-374 (KLHLLQWEDS…RVITDLSSGI (346 aa)). N-linked (GlcNAc...) asparagine glycosylation is found at asparagine 79 and asparagine 170. A disulfide bridge links cysteine 159 with cysteine 313.

The protein belongs to the glycosyltransferase 29 family. The soluble form derives from the membrane form by proteolytic processing. Found in all tissues tested. High expression found in brain, liver, kidney, colon, heart and lung.

The protein resides in the golgi apparatus. Its subcellular location is the golgi stack membrane. The protein localises to the secreted. It catalyses the reaction a beta-D-galactosyl-(1-&gt;4)-N-acetyl-beta-D-glucosaminyl derivative + CMP-N-acetyl-beta-neuraminate = an N-acetyl-alpha-neuraminyl-(2-&gt;3)-beta-D-galactosyl-(1-&gt;4)-N-acetyl-beta-D-glucosaminyl derivative + CMP + H(+). It functions in the pathway protein modification; protein glycosylation. In terms of biological role, catalyzes the formation of the NeuAc-alpha-2,3-Gal-beta-1,4-GlcNAc-, NeuAc-alpha-2,3-Gal-beta-1,3-GlcNAc- and NeuAc-alpha-2,3-Gal-beta-1,3-GalNAc- sequences found in terminal carbohydrate groups of glycoproteins and glycolipids. The highest activity is toward Gal-beta-1,3-GlcNAc and the lowest toward Gal-beta-1,3-GalNAc. This is CMP-N-acetylneuraminate-beta-1,4-galactoside alpha-2,3-sialyltransferase (St3gal3) from Rattus norvegicus (Rat).